The following is a 727-amino-acid chain: Centrosomal protein kizuna (727 aa).

The segment at 1–20 (MTERSGRGGGTRGASALPSP) is disordered. Residues 77 to 124 (KNARIRNQEYLKQFERIQANITASLEKLQELKIEFETQIKKMQLLSKD) are a coiled coil. Disordered stretches follow at residues 176–226 (DFTT…NKSD), 271–456 (EGKK…FTNL), and 564–727 (RLAV…PRTP). Over residues 198-223 (HQQTAQSSDVTGSRVVQTPGDTQCLN) the composition is skewed to polar residues. The segment covering 286–324 (LSPENRTTDLKCDSSRRSEGSEGEILTREHIEVEEERAR) has biased composition (basic and acidic residues). Ser-328 is modified (phosphoserine). Residues 343-359 (PQEKPPARKASSDHLPC) are compositionally biased toward basic and acidic residues. The segment covering 380–390 (LSSSSDLTVSV) has biased composition (low complexity). The residue at position 387 (Thr-387) is a Phosphothreonine; by PLK1. The span at 442–455 (APSTPDSPNESFTN) shows a compositional bias: polar residues. The segment covering 569–583 (SSKSSCSLPSTPSDE) has biased composition (low complexity). Over residues 603 to 613 (QEDESREESTE) the composition is skewed to acidic residues. Polar residues predominate over residues 631–642 (LKQSALQGSTHQ). Composition is skewed to low complexity over residues 659–669 (GLKTGSGTFKT) and 677–689 (SEASFSSSEGSPL). A phosphoserine mark is found at Ser-711, Ser-714, and Ser-716.

Belongs to the kizuna family. As to quaternary structure, interacts with AKAP9, CEP72, ODF2, PCNT and TUBGCP2. Post-translationally, phosphorylation at Thr-387 by PLK1 is not needed for centrosomal localization or pericentriolar material expansion but is indispensable for spindle-pole stabilization.

It is found in the cytoplasm. The protein resides in the cytoskeleton. It localises to the microtubule organizing center. Its subcellular location is the centrosome. The protein localises to the cilium basal body. Its function is as follows. Centrosomal protein required for establishing a robust mitotic centrosome architecture that can endure the forces that converge on the centrosomes during spindle formation. Required for stabilizing the expanded pericentriolar material around the centriole. This chain is Centrosomal protein kizuna (KIZ), found in Bos taurus (Bovine).